The primary structure comprises 351 residues: Neutral protease 2 homolog MGG_10927 (351 aa).

The signal sequence occupies residues 1 to 16 (MKFSIGVSLLATLAGA). A propeptide spanning residues 17-177 (VNVDMAKRDT…AAFLAKRTIV (161 aa)) is cleaved from the precursor. 2 disulfides stabilise this stretch: cysteine 181-cysteine 253 and cysteine 260-cysteine 278. Histidine 303 contacts Zn(2+). Glutamate 304 is a catalytic residue. Histidine 307 provides a ligand contact to Zn(2+).

It belongs to the peptidase M35 family. The cofactor is Zn(2+).

The protein localises to the secreted. It carries out the reaction Preferential cleavage of bonds with hydrophobic residues in P1'. Also 3-Asn-|-Gln-4 and 8-Gly-|-Ser-9 bonds in insulin B chain.. Functionally, secreted metalloproteinase that allows assimilation of proteinaceous substrates. Shows high activities on basic nuclear substrates such as histone and protamine. This Colletotrichum graminicola (strain M1.001 / M2 / FGSC 10212) (Maize anthracnose fungus) protein is Neutral protease 2 homolog MGG_10927.